A 158-amino-acid chain; its full sequence is 2-C-methyl-D-erythritol 2,4-cyclodiphosphate synthase (158 aa).

Residues D8 and H10 each contribute to the a divalent metal cation site. 4-CDP-2-C-methyl-D-erythritol 2-phosphate contacts are provided by residues 8 to 10 (DVH) and 34 to 35 (HS). An a divalent metal cation-binding site is contributed by H42. Residues 56 to 58 (DIG), 61 to 65 (FPDTD), 100 to 106 (AQKPKML), 132 to 135 (TTEE), F139, and K142 each bind 4-CDP-2-C-methyl-D-erythritol 2-phosphate.

This sequence belongs to the IspF family. In terms of assembly, homotrimer. It depends on a divalent metal cation as a cofactor.

It carries out the reaction 4-CDP-2-C-methyl-D-erythritol 2-phosphate = 2-C-methyl-D-erythritol 2,4-cyclic diphosphate + CMP. It participates in isoprenoid biosynthesis; isopentenyl diphosphate biosynthesis via DXP pathway; isopentenyl diphosphate from 1-deoxy-D-xylulose 5-phosphate: step 4/6. Functionally, involved in the biosynthesis of isopentenyl diphosphate (IPP) and dimethylallyl diphosphate (DMAPP), two major building blocks of isoprenoid compounds. Catalyzes the conversion of 4-diphosphocytidyl-2-C-methyl-D-erythritol 2-phosphate (CDP-ME2P) to 2-C-methyl-D-erythritol 2,4-cyclodiphosphate (ME-CPP) with a corresponding release of cytidine 5-monophosphate (CMP). This is 2-C-methyl-D-erythritol 2,4-cyclodiphosphate synthase from Clostridium tetani (strain Massachusetts / E88).